Reading from the N-terminus, the 372-residue chain is Cytochrome b (372 aa).

Transmembrane regions (helical) follow at residues Phe25–Ile45, Trp69–Ile90, Trp105–Leu125, and Phe170–Met190. Heme b is bound by residues His75 and His89. His174 and His188 together coordinate heme b. His193 serves as a coordination point for a ubiquinone. Helical transmembrane passes span Tyr218–Met238, Leu280–His300, Ile312–Thr332, and Phe339–Pro358.

The protein belongs to the cytochrome b family. The cytochrome bc1 complex contains 3 respiratory subunits (MT-CYB, CYC1 and UQCRFS1), 2 core proteins (UQCRC1 and UQCRC2) and probably 6 low-molecular weight proteins. Requires heme b as cofactor.

It is found in the mitochondrion inner membrane. Component of the ubiquinol-cytochrome c reductase complex (complex III or cytochrome b-c1 complex) that is part of the mitochondrial respiratory chain. The b-c1 complex mediates electron transfer from ubiquinol to cytochrome c. Contributes to the generation of a proton gradient across the mitochondrial membrane that is then used for ATP synthesis. The sequence is that of Cytochrome b (MT-CYB) from Pseudechis australis (Mulga snake).